A 473-amino-acid polypeptide reads, in one-letter code: Photosystem II CP43 reaction center protein (473 aa).

Positions 1–14 are excised as a propeptide; that stretch reads MKTLYSLRRFYPVE. An N-acetylthreonine modification is found at Thr-15. Thr-15 carries the post-translational modification Phosphothreonine. Helical transmembrane passes span 69 to 93, 134 to 155, 178 to 200, 255 to 275, and 291 to 312; these read LFEV…PHLA, LLGP…KDRN, KALY…RKIT, KPFA…LSYS, and WFNN…ASQA. Glu-367 is a [CaMn4O5] cluster binding site. Residues 447 to 471 traverse the membrane as a helical segment; it reads RARAAAAGFEKGIDRDFEPVLSMTP.

The protein belongs to the PsbB/PsbC family. PsbC subfamily. PSII is composed of 1 copy each of membrane proteins PsbA, PsbB, PsbC, PsbD, PsbE, PsbF, PsbH, PsbI, PsbJ, PsbK, PsbL, PsbM, PsbT, PsbX, PsbY, PsbZ, Psb30/Ycf12, at least 3 peripheral proteins of the oxygen-evolving complex and a large number of cofactors. It forms dimeric complexes. It depends on Binds multiple chlorophylls and provides some of the ligands for the Ca-4Mn-5O cluster of the oxygen-evolving complex. It may also provide a ligand for a Cl- that is required for oxygen evolution. PSII binds additional chlorophylls, carotenoids and specific lipids. as a cofactor.

The protein localises to the plastid. The protein resides in the chloroplast thylakoid membrane. In terms of biological role, one of the components of the core complex of photosystem II (PSII). It binds chlorophyll and helps catalyze the primary light-induced photochemical processes of PSII. PSII is a light-driven water:plastoquinone oxidoreductase, using light energy to abstract electrons from H(2)O, generating O(2) and a proton gradient subsequently used for ATP formation. This Piper cenocladum (Ant piper) protein is Photosystem II CP43 reaction center protein.